The primary structure comprises 1422 residues: FH1/FH2 domain-containing protein 3 (1422 aa).

The region spanning 18–411 (NSTNFPEPSR…NFGNNSYHSS (394 aa)) is the GBD/FH3 domain. Disordered regions lie at residues 323-464 (RHED…RRRQ), 521-666 (ACLA…GVNG), 687-708 (RKSP…QEAE), 754-781 (SGDL…VQPK), 821-849 (LGHR…PPLL), 1262-1305 (QQKQ…SYAE), 1320-1357 (SSPS…SPNV), and 1374-1410 (TQVP…EEAR). The residue at position 345 (serine 345) is a Phosphoserine. Residues 357–366 (LDRRRSRRHS) show a composition bias toward basic residues. Positions 367–390 (VQSIKSTLSAPTSPCSQSAPSFKP) are enriched in polar residues. Phosphoserine is present on serine 375. The segment covering 410–430 (SSRPSSGSSVPTTPTSSVSPP) has biased composition (low complexity). Positions 438 to 449 (SSPSGLLTSSFR) are enriched in polar residues. The stretch at 448–480 (FRQHQESLAAERERRRQEREERLQRIEREERNK) forms a coiled coil. Over residues 450 to 464 (QHQESLAAERERRRQ) the composition is skewed to basic and acidic residues. Residues 521–535 (ACLAPLSHSPSSSDS) show a composition bias toward low complexity. The span at 536–547 (QEALTVSASSPG) shows a compositional bias: polar residues. Composition is skewed to acidic residues over residues 559-569 (PEPESEAEPEA) and 592-603 (ETEVEQALEQEP). Positions 604-624 (EERASLSEKERQNEGVNERDN) are enriched in basic and acidic residues. A compositionally biased stretch (low complexity) spans 626–635 (SASSVSSSSS). Over residues 637–651 (LEREEKEDKLSRDRT) the composition is skewed to basic and acidic residues. Serine 763 carries the post-translational modification Phosphoserine. Threonine 775 bears the Phosphothreonine mark. A compositionally biased stretch (pro residues) spans 827–849 (PGPPPPPPPTFLGLPPPPPPPLL). Positions 827-858 (PGPPPPPPPTFLGLPPPPPPPLLDSIPPPPVP) constitute an FH1 domain. In terms of domain architecture, FH2 spans 883 to 1279 (GQPTFTKKKK…HRERNKTRGK (397 aa)). Basic residues predominate over residues 1264–1278 (KQKRANHRERNKTRG). The DAD domain occupies 1359 to 1391 (DDAADEIMDRIVKSATQVPSQRVVPRERKRSRA). Positions 1385–1400 (ERKRSRANRKSLRRTL) are enriched in basic residues.

This sequence belongs to the formin homology family. As to quaternary structure, interacts with nestin/NES-based interfilament (IF). Interacts with SQSTM1; isoform 4 threonine phosphorylation disrupts SQSTM1-binding. In terms of processing, phosphorylated on Thr-1474 and Thr-1476 by CK2. As to expression, expressed in the heart, kidney and brain. May be down-regulated in various types of heart diseases, including idiopathic dilated, ventricular dilated, familial dilated and perinatal dilated cardiomyopathies, as well as ischemic heart disease (at protein level).

It is found in the cytoplasm. The protein resides in the cytoskeleton. Its subcellular location is the myofibril. It localises to the sarcomere. The protein localises to the z line. Functionally, actin-organizing protein that may cause stress fiber formation together with cell elongation. Isoform 4 may play a role in actin filament polymerization in cardiomyocytes. In Homo sapiens (Human), this protein is FH1/FH2 domain-containing protein 3 (FHOD3).